Reading from the N-terminus, the 842-residue chain is Glucans biosynthesis glucosyltransferase H (842 aa).

Helical transmembrane passes span 140–160, 194–214, 513–533, 570–590, 615–635, 656–676, and 680–700; these read ILLL…KTIL, ILIL…TALM, VFLT…FLAL, LFAS…MLIW, VLLA…AFLG, FMRH…MAWL, and FLFW…VSVV.

It belongs to the glycosyltransferase 2 family. OpgH subfamily.

Its subcellular location is the cell inner membrane. It functions in the pathway glycan metabolism; osmoregulated periplasmic glucan (OPG) biosynthesis. Functionally, involved in the biosynthesis of osmoregulated periplasmic glucans (OPGs). The protein is Glucans biosynthesis glucosyltransferase H of Citrobacter koseri (strain ATCC BAA-895 / CDC 4225-83 / SGSC4696).